The following is a 600-amino-acid chain: Translation initiation factor IF-2 (600 aa).

One can recognise a tr-type G domain in the interval 112-279 (ERAPIITVMG…AINLQAEILE (168 aa)). The segment at 121–128 (GHVDHGKT) is G1. Position 121 to 128 (121 to 128 (GHVDHGKT)) interacts with GTP. Positions 146 to 150 (GITQH) are G2. A G3 region spans residues 167–170 (DTPG). Residues 167–171 (DTPGH) and 221–224 (NKMD) contribute to the GTP site. The tract at residues 221-224 (NKMD) is G4. The segment at 257–259 (SAL) is G5.

The protein belongs to the TRAFAC class translation factor GTPase superfamily. Classic translation factor GTPase family. IF-2 subfamily.

Its subcellular location is the cytoplasm. Functionally, one of the essential components for the initiation of protein synthesis. Protects formylmethionyl-tRNA from spontaneous hydrolysis and promotes its binding to the 30S ribosomal subunits. Also involved in the hydrolysis of GTP during the formation of the 70S ribosomal complex. This chain is Translation initiation factor IF-2, found in Mycoplasma mobile (strain ATCC 43663 / 163K / NCTC 11711) (Mesomycoplasma mobile).